Reading from the N-terminus, the 238-residue chain is Large ribosomal subunit protein uL5c (238 aa).

Belongs to the universal ribosomal protein uL5 family. In terms of assembly, part of the 50S ribosomal subunit; contacts the 5S rRNA.

It localises to the plastid. Its subcellular location is the chloroplast. In terms of biological role, binds 5S rRNA, forms part of the central protuberance of the 50S subunit. The sequence is that of Large ribosomal subunit protein uL5c (rpl5) from Trieres chinensis (Marine centric diatom).